Consider the following 60-residue polypeptide: MAKQLKLTWTKSFIGCPETQRATIKSLGFKKLQQSLIKEDCPQIRGQISKVQHLLMVEEL.

This sequence belongs to the universal ribosomal protein uL30 family. Part of the 50S ribosomal subunit.

This is Large ribosomal subunit protein uL30 from Syntrophomonas wolfei subsp. wolfei (strain DSM 2245B / Goettingen).